We begin with the raw amino-acid sequence, 153 residues long: 6,7-dimethyl-8-ribityllumazine synthase 1 (153 aa).

Residues phenylalanine 16, 47–49 (ALE), and 76–78 (MVI) contribute to the 5-amino-6-(D-ribitylamino)uracil site. 81–82 (ET) contributes to the (2S)-2-hydroxy-3-oxobutyl phosphate binding site. Catalysis depends on histidine 84, which acts as the Proton donor. A 5-amino-6-(D-ribitylamino)uracil-binding site is contributed by asparagine 109. Arginine 123 lines the (2S)-2-hydroxy-3-oxobutyl phosphate pocket.

This sequence belongs to the DMRL synthase family.

The enzyme catalyses (2S)-2-hydroxy-3-oxobutyl phosphate + 5-amino-6-(D-ribitylamino)uracil = 6,7-dimethyl-8-(1-D-ribityl)lumazine + phosphate + 2 H2O + H(+). Its pathway is cofactor biosynthesis; riboflavin biosynthesis; riboflavin from 2-hydroxy-3-oxobutyl phosphate and 5-amino-6-(D-ribitylamino)uracil: step 1/2. Functionally, catalyzes the formation of 6,7-dimethyl-8-ribityllumazine by condensation of 5-amino-6-(D-ribitylamino)uracil with 3,4-dihydroxy-2-butanone 4-phosphate. This is the penultimate step in the biosynthesis of riboflavin. The protein is 6,7-dimethyl-8-ribityllumazine synthase 1 of Rhizobium meliloti (strain 1021) (Ensifer meliloti).